Reading from the N-terminus, the 468-residue chain is Dimethylamine methyltransferase MtbB1 (468 aa).

Residue Pyl-356 is a non-standard amino acid, pyrrolysine.

It belongs to the dimethylamine methyltransferase family.

It catalyses the reaction Co(I)-[dimethylamine-specific corrinoid protein] + dimethylamine + H(+) = methyl-Co(III)-[dimethylamine-specific corrinoid protein] + methylamine. The protein operates within one-carbon metabolism; methanogenesis from dimethylamine. In terms of biological role, catalyzes the transfer of a methyl group from dimethylamine to the corrinoid cofactor of MtbC. The protein is Dimethylamine methyltransferase MtbB1 (mtbB1) of Methanosarcina mazei (strain ATCC BAA-159 / DSM 3647 / Goe1 / Go1 / JCM 11833 / OCM 88) (Methanosarcina frisia).